The chain runs to 115 residues: U3-lycotoxin-Ls1o (115 aa).

The N-terminal stretch at 1 to 20 (MKFVLLFGVLLVTLFSYSSA) is a signal peptide. Residues 21–44 (EMLDDFDQADEDELLSLIEKEEAR) constitute a propeptide that is removed on maturation. Intrachain disulfides connect C48–C63, C55–C72, C62–C87, and C74–C85.

Belongs to the neurotoxin 19 (CSTX) family. 01 subfamily. As to expression, expressed by the venom gland.

It is found in the secreted. This chain is U3-lycotoxin-Ls1o, found in Lycosa singoriensis (Wolf spider).